The primary structure comprises 414 residues: Probable 1-acylglycerol-3-phosphate O-acyltransferase (414 aa).

Residues 117-382 enclose the AB hydrolase-1 domain; that stretch reads PTLVMVHGYG…GGHFVFIDNP (266 aa). The GXSXG motif lies at 193–197; that stretch reads GHSFG. Residues 375–380 carry the HXXXXD motif motif; it reads HFVFID.

Belongs to the peptidase S33 family. ABHD4/ABHD5 subfamily.

It localises to the cytoplasm. The catalysed reaction is a 1-acyl-sn-glycero-3-phosphate + an acyl-CoA = a 1,2-diacyl-sn-glycero-3-phosphate + CoA. In terms of biological role, lysophosphatidic acid acyltransferase which functions in phosphatidic acid biosynthesis. May regulate neutral lipid accumulation and participate in the regulation of lipid turnover in vegetative cells. May possess additional triacylglycerol lipase and phospholipase A2 activities in vitro. In Oryza sativa subsp. japonica (Rice), this protein is Probable 1-acylglycerol-3-phosphate O-acyltransferase.